The following is a 304-amino-acid chain: 3-diazoavenalumate denitrifying reductase (304 aa).

It belongs to the NAD(P)-dependent epimerase/dehydratase family.

The catalysed reaction is 3-diazoavenalumate + NADPH + H(+) = avenalumate + N2 + NADP(+). The enzyme catalyses 3-diazoavenalumate + NADH + H(+) = avenalumate + N2 + NAD(+). It catalyses the reaction (E)-3-diazocoumarate + NADPH = N2 + (E)-4-coumarate + NADP(+). It carries out the reaction (E)-3-diazocoumarate + NADH = N2 + (E)-4-coumarate + NAD(+). Its function is as follows. Oxidoreductase involved in the biosynthesis of avenalumic acid (AVA). Catalyzes the denitrification of 3-diazoavenalumic acid (3-DAA) to produce AVA. It can also act on 3-diazocoumaric acid (3-DCA). Can use NADPH or NADH as a reductant, with a preference for NADPH. The sequence is that of 3-diazoavenalumate denitrifying reductase from Streptomyces sp.